The following is a 242-amino-acid chain: ATP-dependent dethiobiotin synthetase BioD (242 aa).

Residue 12 to 17 participates in ATP binding; it reads EVGKTV. Position 16 (Thr-16) interacts with Mg(2+). Lys-37 is a catalytic residue. Ser-41 provides a ligand contact to substrate. Residues Asp-51 and 112–115 contribute to the ATP site; that span reads EGAG. 2 residues coordinate Mg(2+): Asp-51 and Glu-112.

This sequence belongs to the dethiobiotin synthetase family. Homodimer. Mg(2+) serves as cofactor.

It is found in the cytoplasm. The enzyme catalyses (7R,8S)-7,8-diammoniononanoate + CO2 + ATP = (4R,5S)-dethiobiotin + ADP + phosphate + 3 H(+). It participates in cofactor biosynthesis; biotin biosynthesis; biotin from 7,8-diaminononanoate: step 1/2. Its function is as follows. Catalyzes a mechanistically unusual reaction, the ATP-dependent insertion of CO2 between the N7 and N8 nitrogen atoms of 7,8-diaminopelargonic acid (DAPA, also called 7,8-diammoniononanoate) to form a ureido ring. This chain is ATP-dependent dethiobiotin synthetase BioD, found in Bacillus cereus (strain G9842).